The following is a 138-amino-acid chain: NADH-quinone oxidoreductase subunit A (138 aa).

3 consecutive transmembrane segments (helical) span residues 8 to 28, 63 to 83, and 93 to 113; these read FGAV…GYLT, FYVV…LFPW, and FALI…AYAW.

It belongs to the complex I subunit 3 family. NDH-1 is composed of 14 different subunits. Subunits NuoA, H, J, K, L, M, N constitute the membrane sector of the complex.

It is found in the cell inner membrane. The catalysed reaction is a quinone + NADH + 5 H(+)(in) = a quinol + NAD(+) + 4 H(+)(out). NDH-1 shuttles electrons from NADH, via FMN and iron-sulfur (Fe-S) centers, to quinones in the respiratory chain. The immediate electron acceptor for the enzyme in this species is believed to be a menaquinone. Couples the redox reaction to proton translocation (for every two electrons transferred, four hydrogen ions are translocated across the cytoplasmic membrane), and thus conserves the redox energy in a proton gradient. This chain is NADH-quinone oxidoreductase subunit A, found in Prosthecochloris aestuarii (strain DSM 271 / SK 413).